The sequence spans 154 residues: ATP synthase subunit b', chloroplastic (154 aa).

A helical transmembrane segment spans residues 22 to 42 (GTLPLIAIQFLILMFLLNILL).

This sequence belongs to the ATPase B chain family. F-type ATPases have 2 components, F(1) - the catalytic core - and F(0) - the membrane proton channel. F(1) has five subunits: alpha(3), beta(3), gamma(1), delta(1), epsilon(1). F(0) has four main subunits: a(1), b(1), b'(1) and c(10-14). The alpha and beta chains form an alternating ring which encloses part of the gamma chain. F(1) is attached to F(0) by a central stalk formed by the gamma and epsilon chains, while a peripheral stalk is formed by the delta, b and b' chains.

The protein localises to the plastid. The protein resides in the chloroplast thylakoid membrane. In terms of biological role, f(1)F(0) ATP synthase produces ATP from ADP in the presence of a proton or sodium gradient. F-type ATPases consist of two structural domains, F(1) containing the extramembraneous catalytic core and F(0) containing the membrane proton channel, linked together by a central stalk and a peripheral stalk. During catalysis, ATP synthesis in the catalytic domain of F(1) is coupled via a rotary mechanism of the central stalk subunits to proton translocation. Its function is as follows. Component of the F(0) channel, it forms part of the peripheral stalk, linking F(1) to F(0). The b'-subunit is a diverged and duplicated form of b found in plants and photosynthetic bacteria. The polypeptide is ATP synthase subunit b', chloroplastic (Vaucheria litorea (Yellow-green alga)).